The sequence spans 89 residues: Small ribosomal subunit protein bS18 (89 aa).

Belongs to the bacterial ribosomal protein bS18 family. As to quaternary structure, part of the 30S ribosomal subunit. Forms a tight heterodimer with protein bS6.

Binds as a heterodimer with protein bS6 to the central domain of the 16S rRNA, where it helps stabilize the platform of the 30S subunit. This chain is Small ribosomal subunit protein bS18, found in Treponema denticola (strain ATCC 35405 / DSM 14222 / CIP 103919 / JCM 8153 / KCTC 15104).